We begin with the raw amino-acid sequence, 344 residues long: Heat-inducible transcription repressor HrcA (344 aa).

This sequence belongs to the HrcA family.

In terms of biological role, negative regulator of class I heat shock genes (grpE-dnaK-dnaJ and groELS operons). Prevents heat-shock induction of these operons. The chain is Heat-inducible transcription repressor HrcA from Streptococcus pneumoniae (strain P1031).